Here is a 465-residue protein sequence, read N- to C-terminus: Probable spore coat protein DDB_G0283555 (465 aa).

The first 22 residues, 1–22 (MRINNLLVCLVLVFSTLSISNA), serve as a signal peptide directing secretion. Residues 35–153 (RNCDSLSEDQ…RYPVCKGGGG (119 aa)) enclose the DSCP-N domain. Follistatin-like domains lie at 160–182 (PCKN…AYCV), 195–217 (LCKA…ACCV), 229–251 (LCDA…ANCV), 257–280 (ECEH…PHCQ), 287–309 (LCRN…PTCI), 318–340 (PCRD…PSCV), and 435–458 (LCEF…PVCL).

In terms of biological role, may contribute to the structure of the coat at the interface between the middle, cellulosic layer and the outer, electron-dense, proteinaceous layer. In Dictyostelium discoideum (Social amoeba), this protein is Probable spore coat protein DDB_G0283555.